A 140-amino-acid polypeptide reads, in one-letter code: PDZ domain-containing protein 11 (140 aa).

Residues 47-129 enclose the PDZ domain; sequence IVTLKKPPGA…ISMRVRFFPY (83 aa).

Interacts with ATP2B1, ATP2B2, ATP2B3, ATP2B4 and ATP7A. Interacts with PLEKHA7 (via WW domains) at zonula adherens; this interaction is essential for the interaction between PLEKHA7 and the ADAM10-binding protein TSPAN33. Interacts with SLC5A6.

The protein localises to the cytoplasm. It is found in the cell junction. Its subcellular location is the adherens junction. It localises to the cell membrane. Its function is as follows. Mediates docking of ADAM10 to zonula adherens by interacting with PLEKHA7 which is required for PLEKHA7 to interact with the ADAM10-binding protein TSPAN33. In Mus musculus (Mouse), this protein is PDZ domain-containing protein 11 (Pdzd11).